Consider the following 364-residue polypeptide: Protein Bop (364 aa).

The disordered stretch occupies residues 66–88; sequence STASGTCGGKPAERGPLAGHMPS. Positions 114 to 128 match the BH3 motif; the sequence is LDRFLAQLGDYMSFH. Residues 258-364 form a disordered region; the sequence is QLTKESTPGP…PGEPPLSPGF (107 aa). 2 stretches are compositionally biased toward pro residues: residues 311–322 and 355–364; these read AQRPDPAHPGGP and PGEPPLSPGF.

In terms of assembly, interacts (via BH3 domain) with VDAC1. Interacts with pro-survival Bcl-2 family members, BCL2, BCL2L1 isoform Bcl-X(L), MCL1, BCL2A1 and BCL2L2. Interacts with BAX and BAK1. As to expression, ubiquitously expressed.

It is found in the mitochondrion. Functionally, could induce apoptosis in a BH3 domain-dependent manner. The direct interaction network of Bcl-2 family members may play a key role in modulation RTL10/BOP intrinsic apoptotic signaling activity. The chain is Protein Bop from Homo sapiens (Human).